A 273-amino-acid polypeptide reads, in one-letter code: MAVVTMKQLLDSGAHFGHQTRRWNPKMKRFIFTDRNGIYIIDLQQTLTYIDKAYEFVKETVAHGGSIMFVGTKKQAQESIAEEATRVGMPYVNQRWLGGMLTNFSTVHKRLQRLKELEAMEQTGGFEGRTKKEILMLTREKNKLERSLGGIRDMQKVPSAIWVVDTNKEHLAVAEARKLNIPIIAILDTNCDPDLVDYPIPGNDDAIRSAALLTKVVASAVAEGLQARAGAGADKAAAEAAEPLAEWEQELLAGATTAAPEAAAGEAAAPEQS.

This sequence belongs to the universal ribosomal protein uS2 family.

The polypeptide is Small ribosomal subunit protein uS2 (Mycolicibacterium vanbaalenii (strain DSM 7251 / JCM 13017 / BCRC 16820 / KCTC 9966 / NRRL B-24157 / PYR-1) (Mycobacterium vanbaalenii)).